Here is a 283-residue protein sequence, read N- to C-terminus: 4-diphosphocytidyl-2-C-methyl-D-erythritol kinase (283 aa).

The active site involves Lys11. Residue 94 to 104 (PVAAGLAGGSA) coordinates ATP. Asp136 is an active-site residue.

Belongs to the GHMP kinase family. IspE subfamily.

The catalysed reaction is 4-CDP-2-C-methyl-D-erythritol + ATP = 4-CDP-2-C-methyl-D-erythritol 2-phosphate + ADP + H(+). The protein operates within isoprenoid biosynthesis; isopentenyl diphosphate biosynthesis via DXP pathway; isopentenyl diphosphate from 1-deoxy-D-xylulose 5-phosphate: step 3/6. Functionally, catalyzes the phosphorylation of the position 2 hydroxy group of 4-diphosphocytidyl-2C-methyl-D-erythritol. In Acetivibrio thermocellus (strain ATCC 27405 / DSM 1237 / JCM 9322 / NBRC 103400 / NCIMB 10682 / NRRL B-4536 / VPI 7372) (Clostridium thermocellum), this protein is 4-diphosphocytidyl-2-C-methyl-D-erythritol kinase.